The sequence spans 208 residues: MSCPEQIVQLMHMHLDGDILPKDEHVLNEHLETCEKCRKHFYEMEKSIALVRSTSHVEAPADFTANVMAKLPKEKKRASVKRWFRTHPVIAAAAVFIILMGGGFFNSWHNDHNFSVSKQPNLVVHNHTVTVPEGETVKGDVTVKNGKLIIKGKIDGDVTVVNGEKYMASAGQVTGQIEEINQLFDWTWYKMKSAGKSVLDAFNPNGEE.

The Cytoplasmic portion of the chain corresponds to 1-87 (MSCPEQIVQL…ASVKRWFRTH (87 aa)). Residues Cys-3, His-30, Cys-34, and Cys-37 each coordinate Zn(2+). The helical transmembrane segment at 88–108 (PVIAAAAVFIILMGGGFFNSW) threads the bilayer. The Extracellular portion of the chain corresponds to 109 to 208 (HNDHNFSVSK…LDAFNPNGEE (100 aa)).

It belongs to the zinc-associated anti-sigma factor (ZAS) superfamily. Anti-sigma-W factor family. As to quaternary structure, forms a heterodimer with cognate sigma factor SigW, which probably prevents SigW from binding to DNA. Zn(2+) is required as a cofactor. In terms of processing, is processed by successive proteolytic events. First, the extracellular region of RsiW is cleaved by PrsW (site-1 cleavage) in response to cell envelope stresses. In a reconstituted E.coli system PrsW cuts between Ala-168 and Ser-169 followed by trimming by E.coli Tsp; the endogenous extracellular exopeptidase responsible for the event in B.subtilis has not been identified. Next, it undergoes cleavage at an intramembrane site (site-2 cleavage) mediated by RasP. This cleavage uncovers a cryptic proteolytic tag with conserved alanine residues in the transmembrane segment, that is recognized mainly by the ClpXP protease, which completely degrades the protein in the cytoplasm and leads to the induction of the sigma-W-controlled genes.

The protein localises to the cell membrane. Its function is as follows. The anti-sigma factor for extracytoplasmic function (ECF) sigma factor sigma-W (SigW). Holds SigW, its cognate ECF sigma factor, in an inactive form until released by regulated intramembrane proteolysis (RIP). SigW and RsiW mediate cell response to cell wall stress. RIP occurs when an extracytoplasmic signal triggers a concerted proteolytic cascade to transmit information and elicit cellular responses. The membrane-spanning regulatory substrate protein is first cut periplasmically (site-1 protease, S1P, PrsW), then within the membrane itself (site-2 protease, S2P, RasP), while cytoplasmic proteases finish degrading the anti-sigma factor, liberating sigma-W. This Bacillus subtilis (strain 168) protein is Anti-sigma-W factor RsiW (rsiW).